A 206-amino-acid polypeptide reads, in one-letter code: Histidine biosynthesis bifunctional protein HisIE (206 aa).

Residues 1 to 117 (MCNEPATSDV…SCFPAAPGQF (117 aa)) are phosphoribosyl-AMP cyclohydrolase. The interval 118–206 (LGALDALVAE…AVTVLEARHR (89 aa)) is phosphoribosyl-ATP pyrophosphohydrolase.

It in the N-terminal section; belongs to the PRA-CH family. The protein in the C-terminal section; belongs to the PRA-PH family.

It is found in the cytoplasm. It carries out the reaction 1-(5-phospho-beta-D-ribosyl)-ATP + H2O = 1-(5-phospho-beta-D-ribosyl)-5'-AMP + diphosphate + H(+). It catalyses the reaction 1-(5-phospho-beta-D-ribosyl)-5'-AMP + H2O = 1-(5-phospho-beta-D-ribosyl)-5-[(5-phospho-beta-D-ribosylamino)methylideneamino]imidazole-4-carboxamide. The protein operates within amino-acid biosynthesis; L-histidine biosynthesis; L-histidine from 5-phospho-alpha-D-ribose 1-diphosphate: step 2/9. Its pathway is amino-acid biosynthesis; L-histidine biosynthesis; L-histidine from 5-phospho-alpha-D-ribose 1-diphosphate: step 3/9. This chain is Histidine biosynthesis bifunctional protein HisIE (hisI), found in Xylella fastidiosa (strain Temecula1 / ATCC 700964).